Consider the following 964-residue polypeptide: Collagen alpha-1(I) chain (964 aa).

The disordered stretch occupies residues 1 to 964 (GGISVPGPMG…PGPPGPPGPP (964 aa)). Pro-18, Pro-21, Pro-24, Pro-33, Pro-36, Pro-39, Pro-53, Pro-68, Pro-74, Pro-83, and Pro-89 each carry 4-hydroxyproline. Positions 56–70 (NGDDGEAGKPGRPGE) are enriched in basic and acidic residues. At Lys-92 the chain carries 5-hydroxylysine; alternate. Lys-92 is a glycosylation site (O-linked (Gal...) hydroxylysine; alternate). Ser-98 carries the phosphoserine modification. Composition is skewed to low complexity over residues 106-117 (DAGPAGPKQMGP) and 126-144 (PGAS…TGAA). A 4-hydroxyproline mark is found at Pro-126, Pro-147, Pro-156, Pro-159, Pro-186, Pro-189, Pro-201, Pro-207, Pro-216, Pro-222, Pro-225, and Pro-240. Residues 146–158 (PPGPTGPAGPPGF) are compositionally biased toward pro residues. A compositionally biased stretch (low complexity) spans 192–231 (AGAAGPAGNPGADGQPGAKGANGAPGIAGAPGFPGARGPS). Lys-243 is subject to 5-hydroxylysine. 8 positions are modified to 4-hydroxyproline: Pro-249, Pro-252, Pro-260, Pro-269, Pro-284, Pro-290, Pro-299, and Pro-305. The span at 294–303 (GERGGPGSRG) shows a compositional bias: gly residues. Lys-314 is modified (5-hydroxylysine). 4-hydroxyproline is present on residues Pro-323, Pro-332, Pro-338, Pro-344, Pro-353, Pro-356, Pro-365, Pro-374, Pro-379, Pro-391, Pro-400, Pro-409, Pro-412, Pro-430, Pro-447, Pro-453, Pro-459, Pro-465, Pro-471, Pro-477, Pro-489, Pro-498, Pro-510, and Pro-519. The span at 347–373 (KGLTGSPGSPGPDGKTGPPGPAGQDGR) shows a compositional bias: low complexity. The segment covering 381–400 (ARGQAGVMGFPGPKGAAGEP) has biased composition (low complexity). A compositionally biased stretch (low complexity) spans 459–468 (PGEAGKPGEQ). A 5-hydroxylysine modification is found at Lys-531. A 4-hydroxyproline mark is found at Pro-537, Pro-552, and Pro-558. The span at 564 to 578 (SGPSGPAGPTGARGA) shows a compositional bias: low complexity. Ser-567 carries the post-translational modification Phosphoserine. 4-hydroxyproline is present on residues Pro-579, Pro-585, Pro-588, Pro-597, Pro-603, Pro-621, Pro-630, and Pro-639. A compositionally biased stretch (low complexity) spans 591–618 (AGFAGPPGADGQPGAKGEPGDAGAKGDA). Residues 620–632 (PPGPAGPTGPPGP) show a composition bias toward pro residues. At Lys-642 the chain carries 5-hydroxylysine. Low complexity predominate over residues 647-663 (SAGPPGATGFPGAAGRV). A 4-hydroxyproline mark is found at Pro-651 and Pro-657. Pro-665 is modified (3-hydroxyproline). 4-hydroxyproline is present on residues Pro-666, Pro-675, Pro-678, Pro-704, Pro-712, Pro-721, Pro-739, Pro-748, Pro-751, Pro-757, Pro-772, Pro-778, Pro-784, Pro-792, and Pro-798. The span at 709 to 721 (KGSPGADGPAGAP) shows a compositional bias: low complexity. Pro residues predominate over residues 771-781 (PPGPMGPPGLA). At Lys-807 the chain carries 5-hydroxylysine. Positions 815-830 (PGPPGAPGAPGAPGPV) are enriched in pro residues. 3 positions are modified to 4-hydroxyproline: Pro-818, Pro-821, and Pro-824. The span at 850–864 (AGPAGARGPAGPQGP) shows a compositional bias: low complexity. Positions 865 to 879 (RGDKGETGEQGDRGI) are enriched in basic and acidic residues. 5-hydroxylysine is present on Lys-868. At Lys-880 the chain carries 5-hydroxylysine; alternate. Lys-880 is a glycosylation site (O-linked (Gal...) hydroxylysine; alternate). 4 positions are modified to 4-hydroxyproline: Pro-895, Pro-898, Pro-916, and Pro-931. Residues 898–931 (PGEQGPSGASGPAGPRGPPGSAGSPGKDGLNGLP) show a composition bias toward low complexity. The residue at position 936 (Pro-936) is a 3-hydroxyproline. Position 937 is a 4-hydroxyproline (Pro-937). Over residues 949 to 964 (VGPPGPPGPPGPPGPP) the composition is skewed to pro residues. Pro-951 carries the 3-hydroxyproline modification. Position 952 is a 4-hydroxyproline (Pro-952). Pro-954 carries the 3-hydroxyproline modification. At Pro-955 the chain carries 4-hydroxyproline. Pro-957 is modified (3-hydroxyproline). A 4-hydroxyproline mark is found at Pro-958, Pro-961, and Pro-964.

The protein belongs to the fibrillar collagen family. As to quaternary structure, trimers of one alpha 2(I) and two alpha 1(I) chains. In terms of processing, contains mostly 4-hydroxyproline. Proline residues at the third position of the tripeptide repeating unit (G-X-Y) are hydroxylated in some or all of the chains. Contains 3-hydroxyproline at a few sites. This modification occurs on the first proline residue in the sequence motif Gly-Pro-Hyp, where Hyp is 4-hydroxyproline. Post-translationally, lysine residues at the third position of the tripeptide repeating unit (G-X-Y) are 5-hydroxylated in some or all of the chains. In terms of processing, O-glycosylated on hydroxylated lysine residues. The O-linked glycan consists of a Glc-Gal disaccharide. As to expression, expressed in bones.

It localises to the secreted. Its subcellular location is the extracellular space. It is found in the extracellular matrix. Type I collagen is a member of group I collagen (fibrillar forming collagen). This Parocnus serus (Greater Haitian ground sloth) protein is Collagen alpha-1(I) chain.